Here is a 378-residue protein sequence, read N- to C-terminus: Beta-1,3-N-acetylglucosaminyltransferase lunatic fringe (378 aa).

Residues 1–8 (MLQRCGRR) lie on the Cytoplasmic side of the membrane. A helical; Signal-anchor for type II membrane protein membrane pass occupies residues 9 to 29 (LLLALVGALLACLLVLTADPP). The Lumenal segment spans residues 30–378 (PTPMPAERGR…TPWCPRSAIF (349 aa)). The disordered stretch occupies residues 85 to 108 (RDADPPPGVASRQGDGHPRPPAEV). Arg-128 serves as a coordination point for substrate. Asn-166 carries N-linked (GlcNAc...) asparagine glycosylation. Cystine bridges form between Cys-167/Cys-178 and Cys-196/Cys-259. A substrate-binding site is contributed by Asp-200. Residue Asp-201 coordinates Mn(2+). Asp-289 is an active-site residue. His-313 is a binding site for Mn(2+). Residues Cys-363 and Cys-372 are joined by a disulfide bond.

The protein belongs to the glycosyltransferase 31 family. Mn(2+) is required as a cofactor. The cofactor is Co(2+). Post-translationally, a soluble form may be derived from the membrane form by proteolytic processing. As to expression, detected at 12.5 dpc in all tissues examined with the highest level observed in adult brain and spleen. Detected in the dental epithelium.

It localises to the golgi apparatus. It is found in the golgi apparatus membrane. The enzyme catalyses 3-O-(alpha-L-fucosyl)-L-threonyl-[EGF-like domain protein] + UDP-N-acetyl-alpha-D-glucosamine = 3-O-(N-acetyl-beta-D-glucosaminyl-(1-&gt;3)-alpha-L-fucosyl)-L-threonyl-[EGF-like domain protein] + UDP + H(+). The catalysed reaction is 3-O-(alpha-L-fucosyl)-L-seryl-[EGF-like domain protein] + UDP-N-acetyl-alpha-D-glucosamine = 3-O-(N-acetyl-beta-D-glucosaminyl-(1-&gt;3)-alpha-L-fucosyl)-L-seryl-[EGF-like domain protein] + UDP + H(+). Its function is as follows. Glycosyltransferase that initiates the elongation of O-linked fucose residues attached to EGF-like repeats in the extracellular domain of Notch molecules. Modulates NOTCH1 activity by modifying O-fucose residues at specific EGF-like domains resulting in inhibition of NOTCH1 activation by JAG1 and enhancement of NOTCH1 activation by DLL1 via an increase in its binding to DLL1. Decreases the binding of JAG1 to NOTCH2 but not that of DLL1. Essential mediator of somite segmentation and patterning. During somite boundary formation, it restricts Notch activity in the presomitic mesoderm to a boundary-forming territory in the posterior half of the prospective somite. In this region, Notch function activates a set of genes that are involved in boundary formation and in anterior-posterior somite identity. Ectopically expressed in the thymus, Lfgn inhibits Notch signaling which results in inhibition of T-cell commitment and promotes B-cell development in lymphoid progenitors. May play a role in boundary formation of the enamel knot. This Mus musculus (Mouse) protein is Beta-1,3-N-acetylglucosaminyltransferase lunatic fringe.